Here is a 150-residue protein sequence, read N- to C-terminus: UPF0178 protein PputW619_5044 (150 aa).

The protein belongs to the UPF0178 family.

The sequence is that of UPF0178 protein PputW619_5044 from Pseudomonas putida (strain W619).